The chain runs to 223 residues: Small ribosomal subunit protein uS3 (223 aa).

Residues 38–106 form the KH type-2 domain; sequence LKRELKEKLK…EVFIDILEVN (69 aa).

The protein belongs to the universal ribosomal protein uS3 family. As to quaternary structure, part of the 30S ribosomal subunit. Forms a tight complex with proteins S10 and S14.

Its function is as follows. Binds the lower part of the 30S subunit head. Binds mRNA in the 70S ribosome, positioning it for translation. The protein is Small ribosomal subunit protein uS3 of Acidobacterium capsulatum (strain ATCC 51196 / DSM 11244 / BCRC 80197 / JCM 7670 / NBRC 15755 / NCIMB 13165 / 161).